Reading from the N-terminus, the 107-residue chain is Large ribosomal subunit protein uL24 (107 aa).

The protein belongs to the universal ribosomal protein uL24 family. As to quaternary structure, part of the 50S ribosomal subunit.

In terms of biological role, one of two assembly initiator proteins, it binds directly to the 5'-end of the 23S rRNA, where it nucleates assembly of the 50S subunit. Its function is as follows. One of the proteins that surrounds the polypeptide exit tunnel on the outside of the subunit. The sequence is that of Large ribosomal subunit protein uL24 from Nitratidesulfovibrio vulgaris (strain DSM 19637 / Miyazaki F) (Desulfovibrio vulgaris).